Reading from the N-terminus, the 478-residue chain is tRNA (guanine(10)-N(2))-methyltransferase TRMT11 (478 aa).

The disordered stretch occupies residues 457 to 478 (EERARSEMANAENVKSKGKEDV).

This sequence belongs to the class I-like SAM-binding methyltransferase superfamily. TRM11 methyltransferase family. As to quaternary structure, part of the heterodimeric TRMT11-TRM112 methyltransferase complex; this complex forms an active tRNA methyltransferase, where TRMT112 acts as an activator of the catalytic subunit TRMT11.

Its subcellular location is the cytoplasm. It catalyses the reaction guanosine(10) in tRNA + S-adenosyl-L-methionine = N(2)-methylguanosine(10) in tRNA + S-adenosyl-L-homocysteine + H(+). Functionally, catalytic subunit of the TRMT11-TRM112 methyltransferase complex, that specifically mediates the S-adenosyl-L-methionine-dependent N(2)-methylation of guanosine nucleotide at position 10 (m2G10) in tRNAs. This is one of the major tRNA (guanine-N(2))-methyltransferases. The polypeptide is tRNA (guanine(10)-N(2))-methyltransferase TRMT11 (trmt11.L) (Xenopus laevis (African clawed frog)).